A 299-amino-acid polypeptide reads, in one-letter code: Regucalcin (299 aa).

Residue E18 coordinates a divalent metal cation. The substrate site is built by R101, N103, and E121. At K144 the chain carries N6-succinyllysine. A divalent metal cation contacts are provided by N154 and D204. The active-site Proton donor/acceptor is the D204. 2 positions are modified to N6-succinyllysine: K244 and K253.

The protein belongs to the SMP-30/CGR1 family. Monomer. Zn(2+) is required as a cofactor. Mn(2+) serves as cofactor. It depends on Ca(2+) as a cofactor. Requires Mg(2+) as cofactor.

The protein resides in the cytoplasm. The catalysed reaction is D-glucono-1,5-lactone + H2O = D-gluconate + H(+). In terms of biological role, gluconolactonase with low activity towards other sugar lactones, including gulonolactone and galactonolactone. Can also hydrolyze diisopropyl phosphorofluoridate and phenylacetate (in vitro). Calcium-binding protein. Modulates Ca(2+) signaling, and Ca(2+)-dependent cellular processes and enzyme activities. The protein is Regucalcin (RGN) of Homo sapiens (Human).